The sequence spans 298 residues: Large ribosomal subunit protein uL18 (298 aa).

Belongs to the universal ribosomal protein uL18 family. Component of the large ribosomal subunit. Mature ribosomes consist of a small (40S) and a large (60S) subunit. The 40S subunit contains about 32 different proteins and 1 molecule of RNA (18S). The 60S subunit contains 45 different proteins and 3 molecules of RNA (25S, 5.8S and 5S).

It is found in the cytoplasm. Its function is as follows. Component of the ribosome, a large ribonucleoprotein complex responsible for the synthesis of proteins in the cell. The small ribosomal subunit (SSU) binds messenger RNAs (mRNAs) and translates the encoded message by selecting cognate aminoacyl-transfer RNA (tRNA) molecules. The large subunit (LSU) contains the ribosomal catalytic site termed the peptidyl transferase center (PTC), which catalyzes the formation of peptide bonds, thereby polymerizing the amino acids delivered by tRNAs into a polypeptide chain. The nascent polypeptides leave the ribosome through a tunnel in the LSU and interact with protein factors that function in enzymatic processing, targeting, and the membrane insertion of nascent chains at the exit of the ribosomal tunnel. The chain is Large ribosomal subunit protein uL18 from Candida albicans (strain SC5314 / ATCC MYA-2876) (Yeast).